Consider the following 282-residue polypeptide: Rhomboid protease GlpG (282 aa).

6 helical membrane-spanning segments follow: residues 96-116 (AGPL…WMQF), 144-164 (GLLH…WYLG), 176-196 (LFVI…LFSG), 197-217 (SHFG…WLTG), 225-242 (IGVP…LIVG), and 247-269 (FGLS…MALW). Catalysis depends on Ser203, which acts as the Nucleophile. His256 is a catalytic residue.

It belongs to the peptidase S54 family.

The protein localises to the cell inner membrane. The enzyme catalyses Cleaves type-1 transmembrane domains using a catalytic dyad composed of serine and histidine that are contributed by different transmembrane domains.. Rhomboid-type serine protease that catalyzes intramembrane proteolysis. This chain is Rhomboid protease GlpG, found in Photorhabdus laumondii subsp. laumondii (strain DSM 15139 / CIP 105565 / TT01) (Photorhabdus luminescens subsp. laumondii).